We begin with the raw amino-acid sequence, 394 residues long: Tubby-like F-box protein 2 (394 aa).

The tract at residues 21–44 (SKRSWSKSSHIAPDQTTPPLDNIP) is disordered. A compositionally biased stretch (polar residues) spans 26–44 (SKSSHIAPDQTTPPLDNIP). Residues 46–101 (SPWASLPPELLHDIIWRVEESETAWPARAAVVSCASVCKSWRGITMEIVRIPEQCG) enclose the F-box domain. Disordered stretches follow at residues 200-225 (ASST…PTNS) and 268-297 (IEEE…PSLR).

This sequence belongs to the TUB family. Ubiquitous.

The protein is Tubby-like F-box protein 2 of Arabidopsis thaliana (Mouse-ear cress).